A 943-amino-acid polypeptide reads, in one-letter code: MSSSSSQSSLYQPRPVLSSQRFSPAPDYIDTRRSFHGDSRLPLRESTGNVQQQHHHQEPSSAHSSFNGGSLVGCYQTPVTLSPSMQSSIPPPAPIVPSQSFDCLRSLQATTSRQHHHVPPPLPQVPTRYHQRGKPRNSINPLYFWPAFRQYRNRQAHKDTQKDKGGVWRRPELEDAFVDSVLLMPHMGRRKFSMGGKLHGRNMLISEYIFVICVALLGSKEIFRIDNSNDSIEQMGRKQVSSHMQVVKKFFEDLRCFHFLFPSEEKKEPGTTNSDDFYEEEEQESFKSNPVLTALAEGRVPDVRPNYEYFSQLLALQSSITVRPKTVEIFVSSADVKIRDEVAYDANDNPLDPASFPHLGKYMNSSGDDKPNVLGKDVLLHEYTRSLDRSTSACVKTVTRRWQRDAPAMYDSLDLPDRDEDCLLLEMCSTVDLHEHAKFPSGSELTGYVEVSVTQPALQGHRWKCVTRLTRPPELQTDEGRPEMYSNESGIHRRGCADTRHEDCGCHLRPRQDIHVPFPAVEWASILSMAVQYPDVEHQRKKEKRSCGKKPDLERSASSSKRKRSEDEGDAAAWTRREPTGSDLICKVAMYQELWSCAPDSTRWTRQAIIFWRFSTTNQWYKYNPVFRPAGTTWRWLTVNDPMSRYHQQRALVYPSAGGNNMPRDAVMSPTPSVSQHLTATMSENFSQAWDSSGSNVTTHTQVHVAGGGGGGGSNMTTLFDSFPSGLATPPPTASLHGSYSASGSFDAGNGVGGCYMPPTCGGGADGPHGGLPAPSQSYFDAAGQTVNTTFGDVKPLLSGSATNPYLPGAAGGGGTGSLDLSGQFAYDDGQQHQHQHQHQQHQQQNHNGGSNGGLPGWDMGPALDSWTAGSSAGGAPAATPTGPDWGPTAPVPRMTEHHPGMWDPVHWSNHGTPGRGGEGSPRQMKRRRTEVLVDGVPVTAGW.

Disordered stretches follow at residues Met1 to Gly69 and Thr111 to Gly133. Over residues Ile29–Leu43 the composition is skewed to basic and acidic residues. The segment covering Pro59–Gly68 has biased composition (polar residues). Positions Gln161 to Leu254 form a DNA-binding region, TEA. Basic and acidic residues predominate over residues Glu537–Arg555. Disordered regions lie at residues Glu537–Thr575 and Gly809–Gly901. The span at Asp865 to Thr889 shows a compositional bias: low complexity.

Belongs to the TEC1 family.

The protein resides in the nucleus. In terms of biological role, brlA, abaA and wetA are pivotal regulators of conidiophore development and conidium maturation. They act individually and together to regulate their own expression and that of numerous other sporulation-specific genes. Binds to the sequence 5'-CATTCY-3', where Y is a pyrimidine, making both major- and minor-groove contacts. This chain is Conidiophore development regulator abaA, found in Hapsidospora chrysogena (Acremonium chrysogenum).